A 76-amino-acid polypeptide reads, in one-letter code: MALPKIEDARKLSDEELAEEIAATKRKLFDLRFQQATRRLEKPHEFKHTKHRLGQLMTVEREREIAQTEIAVNSEQ.

The protein belongs to the universal ribosomal protein uL29 family.

The sequence is that of Large ribosomal subunit protein uL29 from Gloeothece citriformis (strain PCC 7424) (Cyanothece sp. (strain PCC 7424)).